Consider the following 150-residue polypeptide: Depactin (150 aa).

Positions 3 to 148 (SGTALDENVK…SEEAIGDKIK (146 aa)) constitute an ADF-H domain.

This sequence belongs to the actin-binding proteins ADF family.

Functionally, depactin interacts with actin at some of its 12 N-terminal residues and 20 C-terminal residues. Binds to actin monomers from filaments and in solution. The chain is Depactin from Asterias amurensis (Northern Pacific seastar).